Consider the following 169-residue polypeptide: Sec-independent protein translocase protein TatB (169 aa).

Residues Ser-2–Gly-22 form a helical membrane-spanning segment. The tract at residues Asn-106 to Arg-169 is disordered.

This sequence belongs to the TatB family. As to quaternary structure, the Tat system comprises two distinct complexes: a TatABC complex, containing multiple copies of TatA, TatB and TatC subunits, and a separate TatA complex, containing only TatA subunits. Substrates initially bind to the TatABC complex, which probably triggers association of the separate TatA complex to form the active translocon.

Its subcellular location is the cell inner membrane. In terms of biological role, part of the twin-arginine translocation (Tat) system that transports large folded proteins containing a characteristic twin-arginine motif in their signal peptide across membranes. Together with TatC, TatB is part of a receptor directly interacting with Tat signal peptides. TatB may form an oligomeric binding site that transiently accommodates folded Tat precursor proteins before their translocation. This Maricaulis maris (strain MCS10) (Caulobacter maris) protein is Sec-independent protein translocase protein TatB.